Consider the following 426-residue polypeptide: Chaperone SurA (426 aa).

An N-terminal signal peptide occupies residues 1–19; sequence MGRVLVTIFVLFWPIGSFA. PpiC domains lie at 169–270 and 280–379; these read DAQY…KLLD and VTQT…QVLD.

It localises to the periplasm. The catalysed reaction is [protein]-peptidylproline (omega=180) = [protein]-peptidylproline (omega=0). Chaperone involved in the correct folding and assembly of outer membrane proteins. Recognizes specific patterns of aromatic residues and the orientation of their side chains, which are found more frequently in integral outer membrane proteins. May act in both early periplasmic and late outer membrane-associated steps of protein maturation. This Nitrosococcus oceani (strain ATCC 19707 / BCRC 17464 / JCM 30415 / NCIMB 11848 / C-107) protein is Chaperone SurA.